The primary structure comprises 56 residues: Large ribosomal subunit protein bL32 (56 aa).

The segment covering 1–16 has biased composition (basic residues); that stretch reads MAVQKNRKTRSKRGMR. Residues 1 to 28 are disordered; that stretch reads MAVQKNRKTRSKRGMRRSHDALTTAALS.

It belongs to the bacterial ribosomal protein bL32 family.

This is Large ribosomal subunit protein bL32 from Vibrio campbellii (strain ATCC BAA-1116).